We begin with the raw amino-acid sequence, 637 residues long: Chaperone protein DnaK (637 aa).

Threonine 198 is modified (phosphothreonine; by autocatalysis). The interval 597 to 637 (MYQQAAQESGQTEGAAQDPKGAAQDDDVVDADFEEVKDHKK) is disordered. Residues 600-610 (QAAQESGQTEG) are compositionally biased toward polar residues. The span at 620–629 (QDDDVVDADF) shows a compositional bias: acidic residues.

Belongs to the heat shock protein 70 family.

Its function is as follows. Acts as a chaperone. The chain is Chaperone protein DnaK from Desulforapulum autotrophicum (strain ATCC 43914 / DSM 3382 / VKM B-1955 / HRM2) (Desulfobacterium autotrophicum).